The sequence spans 1101 residues: ATP-dependent DNA helicase mph1 (1101 aa).

4 disordered regions span residues 22 to 59 (PGTSDTVESVQTNNRPAKQSDISISQGNEEDEFQSPDR), 95 to 138 (LTQP…QYHD), 154 to 231 (FEEE…TNRP), and 250 to 270 (SSQRGEQIFSPPEKSEPPTHH). Positions 24–48 (TSDTVESVQTNNRPAKQSDISISQG) are enriched in polar residues. Residues 170–190 (TPARTAAAPCAAPKGTAADVP) are compositionally biased toward low complexity. Acidic residues predominate over residues 191-202 (FDLDDIPDDAFD). A compositionally biased stretch (polar residues) spans 209 to 228 (PPRSTSQATRGPPVQSQFRT). In terms of domain architecture, Helicase ATP-binding spans 296-464 (IAQRGLFHNL…AIIDDLGIAK (169 aa)). 309–316 (LPTGLGKT) lines the ATP pocket. Residues 412–415 (DEAH) carry the DEAH box motif. In terms of domain architecture, Helicase C-terminal spans 634–808 (YLKQVVLNHF…GTRFTFHDDK (175 aa)). 2 disordered regions span residues 824–890 (RQID…PTPE) and 991–1067 (SRDP…QDAF). Residues 842-854 (RRARPPKRPPKKF) show a composition bias toward basic residues.

This sequence belongs to the DEAD box helicase family. DEAH subfamily. FANCM sub-subfamily. As to quaternary structure, interacts with the MHF histone-fold complex to form the FANCM-MHF complex.

The protein resides in the nucleus. The enzyme catalyses ATP + H2O = ADP + phosphate + H(+). ATP-dependent DNA helicase involved in DNA damage repair by homologous recombination and in genome maintenance. Capable of unwinding D-loops. Plays a role in limiting crossover recombinants during mitotic DNA double-strand break (DSB) repair. Component of a FANCM-MHF complex which promotes gene conversion at blocked replication forks, probably by reversal of the stalled fork. This is ATP-dependent DNA helicase mph1 from Aspergillus fumigatus (strain CBS 144.89 / FGSC A1163 / CEA10) (Neosartorya fumigata).